Consider the following 325-residue polypeptide: Phospho-N-acetylmuramoyl-pentapeptide-transferase (325 aa).

10 helical membrane passes run 9–29 (ALLV…PWLL), 53–73 (TMGG…FQAF), 77–97 (TLLL…DDYL), 112–132 (KLLG…AFLG), 154–174 (LGNV…ANAV), 182–202 (GLCS…SLAL), 204–224 (EKGL…FLVY), 231–251 (VFMG…FAVL), 257–277 (FLLL…IQVI), and 305–325 (KIVL…GYGL).

This sequence belongs to the glycosyltransferase 4 family. MraY subfamily. The cofactor is Mg(2+).

The protein resides in the cell membrane. The catalysed reaction is UDP-N-acetyl-alpha-D-muramoyl-L-alanyl-gamma-D-glutamyl-meso-2,6-diaminopimeloyl-D-alanyl-D-alanine + di-trans,octa-cis-undecaprenyl phosphate = di-trans,octa-cis-undecaprenyl diphospho-N-acetyl-alpha-D-muramoyl-L-alanyl-D-glutamyl-meso-2,6-diaminopimeloyl-D-alanyl-D-alanine + UMP. The protein operates within cell wall biogenesis; peptidoglycan biosynthesis. Its function is as follows. Catalyzes the initial step of the lipid cycle reactions in the biosynthesis of the cell wall peptidoglycan: transfers peptidoglycan precursor phospho-MurNAc-pentapeptide from UDP-MurNAc-pentapeptide onto the lipid carrier undecaprenyl phosphate, yielding undecaprenyl-pyrophosphoryl-MurNAc-pentapeptide, known as lipid I. The sequence is that of Phospho-N-acetylmuramoyl-pentapeptide-transferase from Carboxydothermus hydrogenoformans (strain ATCC BAA-161 / DSM 6008 / Z-2901).